The sequence spans 600 residues: Adenine deaminase (600 aa).

This sequence belongs to the metallo-dependent hydrolases superfamily. Adenine deaminase family. It depends on Mn(2+) as a cofactor.

The enzyme catalyses adenine + H2O + H(+) = hypoxanthine + NH4(+). This Roseobacter denitrificans (strain ATCC 33942 / OCh 114) (Erythrobacter sp. (strain OCh 114)) protein is Adenine deaminase.